A 545-amino-acid polypeptide reads, in one-letter code: CTP synthase (545 aa).

Residues 1–266 form an amidoligase domain region; sequence MTTNYIFVTG…DDYICKRFSL (266 aa). A CTP-binding site is contributed by S14. S14 provides a ligand contact to UTP. Residues 15 to 20 and D72 each bind ATP; that span reads SLGKGI. Mg(2+) contacts are provided by D72 and E140. CTP-binding positions include 147-149, 187-192, and K223; these read DIE and KTKPTQ. UTP is bound by residues 187-192 and K223; that span reads KTKPTQ. 239-241 is an ATP binding site; sequence KDI. The Glutamine amidotransferase type-1 domain occupies 291-542; that stretch reads TIGMVGKYVA…VKAAGAYQKR (252 aa). G352 contacts L-glutamine. Catalysis depends on C379, which acts as the Nucleophile; for glutamine hydrolysis. Residues 380-383, E403, and R470 contribute to the L-glutamine site; that span reads LGMQ. Residues H515 and E517 contribute to the active site.

This sequence belongs to the CTP synthase family. In terms of assembly, homotetramer.

It carries out the reaction UTP + L-glutamine + ATP + H2O = CTP + L-glutamate + ADP + phosphate + 2 H(+). The catalysed reaction is L-glutamine + H2O = L-glutamate + NH4(+). It catalyses the reaction UTP + NH4(+) + ATP = CTP + ADP + phosphate + 2 H(+). It participates in pyrimidine metabolism; CTP biosynthesis via de novo pathway; CTP from UDP: step 2/2. Allosterically activated by GTP, when glutamine is the substrate; GTP has no effect on the reaction when ammonia is the substrate. The allosteric effector GTP functions by stabilizing the protein conformation that binds the tetrahedral intermediate(s) formed during glutamine hydrolysis. Inhibited by the product CTP, via allosteric rather than competitive inhibition. In terms of biological role, catalyzes the ATP-dependent amination of UTP to CTP with either L-glutamine or ammonia as the source of nitrogen. Regulates intracellular CTP levels through interactions with the four ribonucleotide triphosphates. This Pectobacterium atrosepticum (strain SCRI 1043 / ATCC BAA-672) (Erwinia carotovora subsp. atroseptica) protein is CTP synthase.